Reading from the N-terminus, the 483-residue chain is Glutamate--tRNA ligase 1 (483 aa).

Positions 9 to 19 (PSPTGFLHIGG) match the 'HIGH' region motif. The short motif at 238–242 (KLSKR) is the 'KMSKS' region element. Position 241 (K241) interacts with ATP.

It belongs to the class-I aminoacyl-tRNA synthetase family. Glutamate--tRNA ligase type 1 subfamily. As to quaternary structure, monomer.

The protein resides in the cytoplasm. It catalyses the reaction tRNA(Glu) + L-glutamate + ATP = L-glutamyl-tRNA(Glu) + AMP + diphosphate. Its function is as follows. Catalyzes the attachment of glutamate to tRNA(Glu) in a two-step reaction: glutamate is first activated by ATP to form Glu-AMP and then transferred to the acceptor end of tRNA(Glu). The chain is Glutamate--tRNA ligase 1 from Bartonella henselae (strain ATCC 49882 / DSM 28221 / CCUG 30454 / Houston 1) (Rochalimaea henselae).